The following is a 184-amino-acid chain: Leucine-rich repeat-containing protein 20 (184 aa).

6 LRR repeats span residues 23-44 (GSDTLDLADCKLVSFPICIYKV), 51-72 (QIHLITLANNELKSLTSKFMTT), 75-96 (QLRELRLEGNYLFRLPNEVSSL), 98-120 (HLRAIDLSRNQFQDFPEQLTTLP), 121-141 (ALETINLEENEIVDVPVEKLA), and 145-167 (ALRVINLRLNPLSADVRVIAPPL). Residue S175 is modified to Phosphoserine.

This chain is Leucine-rich repeat-containing protein 20 (Lrrc20), found in Mus musculus (Mouse).